The chain runs to 864 residues: Structure-specific endonuclease subunit SLX4 (864 aa).

Disordered stretches follow at residues M1–P21, L49–G69, T91–A113, A161–H190, L289–K318, T346–P385, A413–S433, and K625–S767. Over residues S295–S306 the composition is skewed to polar residues. Over residues K307–K318 the composition is skewed to basic residues. A compositionally biased stretch (polar residues) spans Q656–V668. The span at V685 to K695 shows a compositional bias: low complexity. Positions P743–S767 are enriched in polar residues.

The protein belongs to the SLX4 family. Forms a heterodimer with SLX1. Post-translationally, phosphorylated in response to DNA damage.

It localises to the nucleus. Its function is as follows. Regulatory subunit of the SLX1-SLX4 structure-specific endonuclease that resolves DNA secondary structures generated during DNA repair and recombination. Has endonuclease activity towards branched DNA substrates, introducing single-strand cuts in duplex DNA close to junctions with ss-DNA. The sequence is that of Structure-specific endonuclease subunit SLX4 from Paracoccidioides lutzii (strain ATCC MYA-826 / Pb01) (Paracoccidioides brasiliensis).